Reading from the N-terminus, the 419-residue chain is UDP-N-acetylglucosamine 1-carboxyvinyltransferase (419 aa).

Position 22–23 (22–23 (KN)) interacts with phosphoenolpyruvate. Residue Arg-91 coordinates UDP-N-acetyl-alpha-D-glucosamine. The Proton donor role is filled by Cys-115. Residue Cys-115 is modified to 2-(S-cysteinyl)pyruvic acid O-phosphothioketal. UDP-N-acetyl-alpha-D-glucosamine-binding positions include 120–124 (RPVDL), 160–163 (KVSV), Asp-305, and Ile-327.

The protein belongs to the EPSP synthase family. MurA subfamily.

The protein resides in the cytoplasm. It catalyses the reaction phosphoenolpyruvate + UDP-N-acetyl-alpha-D-glucosamine = UDP-N-acetyl-3-O-(1-carboxyvinyl)-alpha-D-glucosamine + phosphate. It functions in the pathway cell wall biogenesis; peptidoglycan biosynthesis. Cell wall formation. Adds enolpyruvyl to UDP-N-acetylglucosamine. The polypeptide is UDP-N-acetylglucosamine 1-carboxyvinyltransferase (Tolumonas auensis (strain DSM 9187 / NBRC 110442 / TA 4)).